The chain runs to 124 residues: Small ribosomal subunit protein uS12 (124 aa).

The interval 1–25 is disordered; that stretch reads MPTINQLIRKPRKSQKEKTASPALQ. Aspartate 89 is modified (3-methylthioaspartic acid).

This sequence belongs to the universal ribosomal protein uS12 family. As to quaternary structure, part of the 30S ribosomal subunit. Contacts proteins S8 and S17. May interact with IF1 in the 30S initiation complex.

Its function is as follows. With S4 and S5 plays an important role in translational accuracy. Interacts with and stabilizes bases of the 16S rRNA that are involved in tRNA selection in the A site and with the mRNA backbone. Located at the interface of the 30S and 50S subunits, it traverses the body of the 30S subunit contacting proteins on the other side and probably holding the rRNA structure together. The combined cluster of proteins S8, S12 and S17 appears to hold together the shoulder and platform of the 30S subunit. This Borrelia turicatae (strain 91E135) protein is Small ribosomal subunit protein uS12.